The sequence spans 127 residues: Small integral membrane protein 33 (127 aa).

N-linked (GlcNAc...) asparagine glycosylation is present at Asn-15. Residues 38-58 (PLLAAIIAAFVLLAICIVLAV) form a helical membrane-spanning segment.

It is found in the membrane. The sequence is that of Small integral membrane protein 33 from Mus musculus (Mouse).